Consider the following 540-residue polypeptide: Glucose-6-phosphate isomerase (540 aa).

E350 serves as the catalytic Proton donor. Catalysis depends on residues H381 and K503.

This sequence belongs to the GPI family.

Its subcellular location is the cytoplasm. It carries out the reaction alpha-D-glucose 6-phosphate = beta-D-fructose 6-phosphate. It functions in the pathway carbohydrate biosynthesis; gluconeogenesis. The protein operates within carbohydrate degradation; glycolysis; D-glyceraldehyde 3-phosphate and glycerone phosphate from D-glucose: step 2/4. Catalyzes the reversible isomerization of glucose-6-phosphate to fructose-6-phosphate. The protein is Glucose-6-phosphate isomerase of Paraburkholderia phytofirmans (strain DSM 17436 / LMG 22146 / PsJN) (Burkholderia phytofirmans).